Reading from the N-terminus, the 424-residue chain is Glutamate-1-semialdehyde 2,1-aminomutase (424 aa).

K266 carries the post-translational modification N6-(pyridoxal phosphate)lysine.

Belongs to the class-III pyridoxal-phosphate-dependent aminotransferase family. HemL subfamily. Homodimer. The cofactor is pyridoxal 5'-phosphate.

The protein localises to the cytoplasm. It catalyses the reaction (S)-4-amino-5-oxopentanoate = 5-aminolevulinate. It participates in porphyrin-containing compound metabolism; protoporphyrin-IX biosynthesis; 5-aminolevulinate from L-glutamyl-tRNA(Glu): step 2/2. This Azoarcus sp. (strain BH72) protein is Glutamate-1-semialdehyde 2,1-aminomutase.